The following is a 240-amino-acid chain: Anti-H(O) lectin (240 aa).

Residue Asn4 is glycosylated (N-linked (GlcNAc...) asparagine). 2 residues coordinate Mn(2+): Glu124 and Asp126. The Ca(2+) site is built by Asp126, Tyr128, Asn130, and Asp133. 2 residues coordinate Mn(2+): Asp133 and His141.

This sequence belongs to the leguminous lectin family.

Its function is as follows. L-fucose specific lectin. The polypeptide is Anti-H(O) lectin (Lotus tetragonolobus (Winged pea)).